We begin with the raw amino-acid sequence, 1006 residues long: Unconventional myosin-Id (1006 aa).

At Ala-2 the chain carries N-acetylalanine. Residues Phe-9–Ala-695 form the Myosin motor domain. Gly-102–Thr-109 is an ATP binding site. Residue Ser-200 is modified to Phosphoserine. Phosphotyrosine is present on Tyr-536. The interval Met-572–Asp-594 is actin-binding. IQ domains lie at Val-699–Lys-719 and Thr-721–His-741. A TH1 domain is found at Gly-812–Gly-1005.

Belongs to the TRAFAC class myosin-kinesin ATPase superfamily. Myosin family. Interacts (via the two IQ motifs) with calmodulin. Binds an additional calmodulin chain via a third, C-terminal region. Interacts with F-actin.

Its subcellular location is the cytoplasm. The protein localises to the perikaryon. It localises to the cell projection. The protein resides in the dendrite. It is found in the early endosome. Its subcellular location is the cell cortex. Functionally, unconventional myosin that functions as actin-based motor protein with ATPase activity. Plays a role in endosomal protein trafficking, and especially in the transfer of cargo proteins from early to recycling endosomes. Required for normal planar cell polarity in ciliated tracheal cells, for normal rotational polarity of cilia, and for coordinated, unidirectional ciliary movement in the trachea. Required for normal, polarized cilia organization in brain ependymal epithelial cells. The chain is Unconventional myosin-Id (MYO1D) from Bos taurus (Bovine).